A 481-amino-acid chain; its full sequence is Transcription factor TGA9 (481 aa).

Residues 91 to 181 (QTLPTESSKS…GKQLDAKTLR (91 aa)) form a disordered region. A compositionally biased stretch (low complexity) spans 97 to 109 (SSKSGGESSDSGS). The segment covering 110 to 126 (ANFSGKAESQQPESPMS) has biased composition (polar residues). Residues 143–155 (SSSTSGLPSTSRT) show a composition bias toward low complexity. The Nuclear localization signal signature appears at 165-172 (KRKATTSG). The bZIP domain occupies 176–220 (DAKTLRRLAQNREAARKSRLRKKAYVQQLESSRIKLSQLEQELQR). Residues 178–198 (KTLRRLAQNREAARKSRLRKK) form a basic motif region. Positions 204-218 (LESSRIKLSQLEQEL) are leucine-zipper. The DOG1 domain occupies 242–450 (AAIFDMEYGR…RALSSLWLSR (209 aa)).

Belongs to the bZIP family. As to quaternary structure, homodimer. Binds DNA as a dimer. Interacts with floral glutaredoxins GRXC7/ROXY1 and GRXC8/ROXY2 in the nucleus. Interacts with TGA1, TGA2, TGA3, TGA4, TGA5, TGA6, TGA7, TGA10 and PAN. As to expression, mostly expressed in stems, inflorescence apex and flowers, and, to a lower extent, in seedlings, leaves and siliques.

The protein resides in the nucleus. Its function is as follows. Together with TGA10, basic leucine-zipper transcription factor required for anther development, probably via the activation of SPL expression in anthers and via the regulation of genes with functions in early and middle tapetal development. Required for signaling responses to pathogen-associated molecular patterns (PAMPs) such as flg22 that involves chloroplastic reactive oxygen species (ROS) production and subsequent expression of H(2)O(2)-responsive genes. In Arabidopsis thaliana (Mouse-ear cress), this protein is Transcription factor TGA9.